A 227-amino-acid polypeptide reads, in one-letter code: 7-cyano-7-deazaguanine synthase (227 aa).

7-17 (LSGGMDSLVTT) lines the ATP pocket. The Zn(2+) site is built by cysteine 187, cysteine 195, cysteine 198, and cysteine 201.

This sequence belongs to the QueC family. It depends on Zn(2+) as a cofactor.

The catalysed reaction is 7-carboxy-7-deazaguanine + NH4(+) + ATP = 7-cyano-7-deazaguanine + ADP + phosphate + H2O + H(+). The protein operates within purine metabolism; 7-cyano-7-deazaguanine biosynthesis. Catalyzes the ATP-dependent conversion of 7-carboxy-7-deazaguanine (CDG) to 7-cyano-7-deazaguanine (preQ(0)). The protein is 7-cyano-7-deazaguanine synthase of Chlorobium luteolum (strain DSM 273 / BCRC 81028 / 2530) (Pelodictyon luteolum).